Reading from the N-terminus, the 225-residue chain is Increased recombination centers protein 22 (225 aa).

A signal peptide spans 1–24 (MRFFMLIGFNLLTALSSFCAAISA). Residues 25 to 169 (NNSDNVEHEQ…PTLFEIVSPP (145 aa)) are Lumenal-facing. The helical transmembrane segment at 170 to 190 (ISFFNPQFLSVQVIFLAIIGG) threads the bilayer. Over 191–225 (VSYYYMKSKTNQRPSKKSATVKKVDESWLPETYKK) the chain is Cytoplasmic. Positions 203–225 (RPSKKSATVKKVDESWLPETYKK) are disordered. Residues 212-225 (KKVDESWLPETYKK) are compositionally biased toward basic and acidic residues.

Belongs to the IRC22 family.

It localises to the endoplasmic reticulum membrane. Its function is as follows. Is probably involved in a pathway contributing to genomic integrity. The chain is Increased recombination centers protein 22 (IRC22) from Saccharomyces cerevisiae (strain AWRI1631) (Baker's yeast).